Consider the following 45-residue polypeptide: FKLGSFLKKAWKSKLAKKLRAKGKEMLKDYAKGLLEGGSEEVPGQ.

Monomer and homodimer. In terms of tissue distribution, expressed by the venom gland.

It is found in the secreted. The protein resides in the target cell membrane. Functionally, at high concentrations, acts as a pore former in cellular membranes and causes the leakage of the cells. At submicromolar concentrations, degranulates granulocytes and has a weak hemolytic activity against human red blood cells. Also strongly inhibits the production of superoxide anions. Has a strong antibacterial activity against Gram-negative bacteria but is less active against Gram-positive bacteria. Also has antifungal activity. Induces reversible G-protein dependent Ca(2+) release from intracellular stores and increase Ca(2+) influx in HL-60 cells. Induces the activation of the Rac pathway in granulocytes. Synergistically enhances the excitatory effects of short and long chain ion-channel-specific neurotoxins by interaction with the neuronal membranes. The polypeptide is Parabutoporin (Parabuthus schlechteri (Scorpion)).